Consider the following 1047-residue polypeptide: Isoleucine--tRNA ligase (1047 aa).

The short motif at 52–62 is the 'HIGH' region element; it reads PTANGMPGAHH. Residues 600-604 carry the 'KMSKS' region motif; the sequence is KMSKH. K603 is an ATP binding site.

The protein belongs to the class-I aminoacyl-tRNA synthetase family. IleS type 2 subfamily. Monomer. Requires Zn(2+) as cofactor.

Its subcellular location is the cytoplasm. The enzyme catalyses tRNA(Ile) + L-isoleucine + ATP = L-isoleucyl-tRNA(Ile) + AMP + diphosphate. Its function is as follows. Catalyzes the attachment of isoleucine to tRNA(Ile). As IleRS can inadvertently accommodate and process structurally similar amino acids such as valine, to avoid such errors it has two additional distinct tRNA(Ile)-dependent editing activities. One activity is designated as 'pretransfer' editing and involves the hydrolysis of activated Val-AMP. The other activity is designated 'posttransfer' editing and involves deacylation of mischarged Val-tRNA(Ile). In Streptomyces avermitilis (strain ATCC 31267 / DSM 46492 / JCM 5070 / NBRC 14893 / NCIMB 12804 / NRRL 8165 / MA-4680), this protein is Isoleucine--tRNA ligase.